A 504-amino-acid chain; its full sequence is ATP synthase subunit alpha (504 aa).

171–178 serves as a coordination point for ATP; sequence GDRATGKT.

It belongs to the ATPase alpha/beta chains family. As to quaternary structure, F-type ATPases have 2 components, CF(1) - the catalytic core - and CF(0) - the membrane proton channel. CF(1) has five subunits: alpha(3), beta(3), gamma(1), delta(1), epsilon(1). CF(0) has three main subunits: a(1), b(2) and c(9-12). The alpha and beta chains form an alternating ring which encloses part of the gamma chain. CF(1) is attached to CF(0) by a central stalk formed by the gamma and epsilon chains, while a peripheral stalk is formed by the delta and b chains.

The protein resides in the cell inner membrane. The catalysed reaction is ATP + H2O + 4 H(+)(in) = ADP + phosphate + 5 H(+)(out). Produces ATP from ADP in the presence of a proton gradient across the membrane. The alpha chain is a regulatory subunit. The polypeptide is ATP synthase subunit alpha (Sulfurihydrogenibium sp. (strain YO3AOP1)).